Here is a 231-residue protein sequence, read N- to C-terminus: Biosynthetic peptidoglycan transglycosylase (231 aa).

Residues 10 to 30 (LLLLGLIGLFLVWQLWLLGWV) traverse the membrane as a helical segment.

It belongs to the glycosyltransferase 51 family.

The protein localises to the cell inner membrane. It catalyses the reaction [GlcNAc-(1-&gt;4)-Mur2Ac(oyl-L-Ala-gamma-D-Glu-L-Lys-D-Ala-D-Ala)](n)-di-trans,octa-cis-undecaprenyl diphosphate + beta-D-GlcNAc-(1-&gt;4)-Mur2Ac(oyl-L-Ala-gamma-D-Glu-L-Lys-D-Ala-D-Ala)-di-trans,octa-cis-undecaprenyl diphosphate = [GlcNAc-(1-&gt;4)-Mur2Ac(oyl-L-Ala-gamma-D-Glu-L-Lys-D-Ala-D-Ala)](n+1)-di-trans,octa-cis-undecaprenyl diphosphate + di-trans,octa-cis-undecaprenyl diphosphate + H(+). The protein operates within cell wall biogenesis; peptidoglycan biosynthesis. Peptidoglycan polymerase that catalyzes glycan chain elongation from lipid-linked precursors. The sequence is that of Biosynthetic peptidoglycan transglycosylase from Dechloromonas aromatica (strain RCB).